A 474-amino-acid polypeptide reads, in one-letter code: Trichothecene 3-O-acetyltransferase (474 aa).

This sequence belongs to the trichothecene 3-O-acetyltransferase family.

Trichothecene 3-O-acetyltransferase involved in self-protection against trichothecenes, mycotoxins acting as eukaryotic protein synthesis inhibitors. Its existence is surprising in a non-trichothecene producer organism which needs no self-protection again endogenic trichothecenes. The persistence of this non-essential gene may be due to a selective advantage that it may confer, like a resistance to exogenic trichothecenes. In Saccharomyces cerevisiae (strain ATCC 204508 / S288c) (Baker's yeast), this protein is Trichothecene 3-O-acetyltransferase (AYT1).